An 83-amino-acid chain; its full sequence is uncharacterized protein (83 aa).

The helical transmembrane segment at 58–78 threads the bilayer; sequence AVLLWIAIIATLGNIVVVGVV.

The protein localises to the membrane. This is an uncharacterized protein from Homo sapiens (Human).